We begin with the raw amino-acid sequence, 2397 residues long: Cell wall alpha-1,3-glucan synthase mok11 (2397 aa).

The disordered stretch occupies residues 1683–1705 (SNQQSFDFKSSESDSFPQKSPSV). The span at 1687-1698 (SFDFKSSESDSF) shows a compositional bias: low complexity.

This sequence belongs to the glycosyltransferase group 1 family.

It carries out the reaction [(1-&gt;3)-alpha-D-glucosyl](n) + UDP-alpha-D-glucose = [(1-&gt;3)-alpha-D-glucosyl](n+1) + UDP + H(+). In Schizosaccharomyces pombe (strain 972 / ATCC 24843) (Fission yeast), this protein is Cell wall alpha-1,3-glucan synthase mok11 (mok11).